Reading from the N-terminus, the 412-residue chain is Early growth response protein 2b (412 aa).

The disordered stretch occupies residues tyrosine 269–tyrosine 299. 3 consecutive C2H2-type zinc fingers follow at residues tyrosine 299–histidine 323, phenylalanine 329–histidine 351, and phenylalanine 357–histidine 379. Residues glutamate 371–glutamine 412 are disordered. The segment covering arginine 374–glutamate 384 has biased composition (basic residues). Low complexity predominate over residues serine 388–valine 401.

It belongs to the EGR C2H2-type zinc-finger protein family.

It localises to the nucleus. In terms of biological role, sequence-specific DNA-binding transcription factor. Binds to two specific DNA sites located in the promoter region of HOXA4. The polypeptide is Early growth response protein 2b (egr2b) (Danio rerio (Zebrafish)).